A 597-amino-acid chain; its full sequence is Elongation factor 4 (597 aa).

The tr-type G domain maps to 2 to 184; sequence DHIRNFSIIA…ALVAKVPPPK (183 aa). GTP contacts are provided by residues 14 to 19 and 131 to 134; these read DHGKST and NKID.

Belongs to the TRAFAC class translation factor GTPase superfamily. Classic translation factor GTPase family. LepA subfamily.

It localises to the cell inner membrane. The catalysed reaction is GTP + H2O = GDP + phosphate + H(+). In terms of biological role, required for accurate and efficient protein synthesis under certain stress conditions. May act as a fidelity factor of the translation reaction, by catalyzing a one-codon backward translocation of tRNAs on improperly translocated ribosomes. Back-translocation proceeds from a post-translocation (POST) complex to a pre-translocation (PRE) complex, thus giving elongation factor G a second chance to translocate the tRNAs correctly. Binds to ribosomes in a GTP-dependent manner. This is Elongation factor 4 from Paraburkholderia phytofirmans (strain DSM 17436 / LMG 22146 / PsJN) (Burkholderia phytofirmans).